Here is a 469-residue protein sequence, read N- to C-terminus: Glutamate--tRNA ligase (469 aa).

A 'HIGH' region motif is present at residues 11–21 (PSPTGFIHLGN). Over residues 116 to 131 (ASGEKPRYDGTWRPEP) the composition is skewed to basic and acidic residues. The disordered stretch occupies residues 116–139 (ASGEKPRYDGTWRPEPGKVLPTPP). The short motif at 243–247 (KMSKR) is the 'KMSKS' region element. ATP is bound at residue K246.

This sequence belongs to the class-I aminoacyl-tRNA synthetase family. Glutamate--tRNA ligase type 1 subfamily. In terms of assembly, monomer.

The protein localises to the cytoplasm. It catalyses the reaction tRNA(Glu) + L-glutamate + ATP = L-glutamyl-tRNA(Glu) + AMP + diphosphate. In terms of biological role, catalyzes the attachment of glutamate to tRNA(Glu) in a two-step reaction: glutamate is first activated by ATP to form Glu-AMP and then transferred to the acceptor end of tRNA(Glu). The polypeptide is Glutamate--tRNA ligase (Paraburkholderia phymatum (strain DSM 17167 / CIP 108236 / LMG 21445 / STM815) (Burkholderia phymatum)).